An 89-amino-acid polypeptide reads, in one-letter code: Small ribosomal subunit protein uS17 (89 aa).

This sequence belongs to the universal ribosomal protein uS17 family. As to quaternary structure, part of the 30S ribosomal subunit.

One of the primary rRNA binding proteins, it binds specifically to the 5'-end of 16S ribosomal RNA. This chain is Small ribosomal subunit protein uS17, found in Albidiferax ferrireducens (strain ATCC BAA-621 / DSM 15236 / T118) (Rhodoferax ferrireducens).